Here is a 264-residue protein sequence, read N- to C-terminus: NAD kinase (264 aa).

The active-site Proton acceptor is the Asp45. Residues 45–46, His50, 121–122, Arg147, Asp149, Ala184, and Gln224 contribute to the NAD(+) site; these read DG and NE.

Belongs to the NAD kinase family. A divalent metal cation is required as a cofactor.

The protein localises to the cytoplasm. The catalysed reaction is NAD(+) + ATP = ADP + NADP(+) + H(+). Involved in the regulation of the intracellular balance of NAD and NADP, and is a key enzyme in the biosynthesis of NADP. Catalyzes specifically the phosphorylation on 2'-hydroxyl of the adenosine moiety of NAD to yield NADP. The protein is NAD kinase of Lysinibacillus sphaericus (strain C3-41).